A 239-amino-acid polypeptide reads, in one-letter code: Probable transcriptional regulatory protein lin0388 (239 aa).

It belongs to the TACO1 family. YeeN subfamily.

Its subcellular location is the cytoplasm. In Listeria innocua serovar 6a (strain ATCC BAA-680 / CLIP 11262), this protein is Probable transcriptional regulatory protein lin0388.